A 105-amino-acid polypeptide reads, in one-letter code: Nitrogen fixation nifHD region glnB-like protein 1 (105 aa).

The protein belongs to the P(II) protein family.

Could be involved in the regulation of nitrogen fixation. This chain is Nitrogen fixation nifHD region glnB-like protein 1 (glnBI), found in Methanococcus maripaludis (strain DSM 14266 / JCM 13030 / NBRC 101832 / S2 / LL).